A 284-amino-acid polypeptide reads, in one-letter code: NAD kinase (284 aa).

Aspartate 70 serves as the catalytic Proton acceptor. NAD(+)-binding positions include 70 to 71 (DG), 139 to 140 (NE), lysine 167, aspartate 169, leucine 177, 180 to 185 (TAYNLS), and glutamine 236.

Belongs to the NAD kinase family. A divalent metal cation is required as a cofactor.

It is found in the cytoplasm. The enzyme catalyses NAD(+) + ATP = ADP + NADP(+) + H(+). Its function is as follows. Involved in the regulation of the intracellular balance of NAD and NADP, and is a key enzyme in the biosynthesis of NADP. Catalyzes specifically the phosphorylation on 2'-hydroxyl of the adenosine moiety of NAD to yield NADP. The sequence is that of NAD kinase from Helicobacter pylori (strain G27).